We begin with the raw amino-acid sequence, 125 residues long: Glycine cleavage system H protein (125 aa).

The region spanning 19 to 101 is the Lipoyl-binding domain; the sequence is GAVVGITDFA…NGSGWFFKLT (83 aa). Residue Lys-60 is modified to N6-lipoyllysine.

The protein belongs to the GcvH family. As to quaternary structure, the glycine cleavage system is composed of four proteins: P, T, L and H. (R)-lipoate is required as a cofactor.

Functionally, the glycine cleavage system catalyzes the degradation of glycine. The H protein shuttles the methylamine group of glycine from the P protein to the T protein. The polypeptide is Glycine cleavage system H protein (Methylocella silvestris (strain DSM 15510 / CIP 108128 / LMG 27833 / NCIMB 13906 / BL2)).